The chain runs to 1081 residues: uncharacterized protein (1081 aa).

2 coiled-coil regions span residues 18-131 (AIEE…FEEN) and 173-242 (NHDE…NDDK). The segment covering 22 to 53 (NNKNREIQEKRQKETKDRNDRMVQNQKDRKEM) has biased composition (basic and acidic residues). Positions 22 to 60 (NNKNREIQEKRQKETKDRNDRMVQNQKDRKEMIGLTNEK) are disordered. 2 disordered regions span residues 250–321 (TDDE…KPGI) and 388–1081 (QEPK…GNDE). The span at 267-283 (TPTPTPTPTPTPTPTPT) shows a compositional bias: pro residues. Low complexity-rich tracts occupy residues 284–313 (PTTT…KTST) and 396–410 (NNQS…QAGD). Residues 411 to 421 (DQNKNQNRDEN) are compositionally biased toward basic and acidic residues. 6 stretches are compositionally biased toward low complexity: residues 422 to 568 (NQGG…NNQE), 576 to 602 (NQDG…GGEN), 614 to 623 (GENNQDGGEN), 633 to 644 (DGENNQDGGENN), 662 to 672 (GENNQDGGENN), and 680 to 733 (QDGG…NNQD). Composition is skewed to acidic residues over residues 748–768 (GGED…DNQD), 778–832 (NNQD…DENN), and 840–854 (QDGD…DENN). 2 stretches are compositionally biased toward low complexity: residues 855 to 869 (NQDG…GENN) and 877 to 888 (NQDGGENNQDGE). Residues 889–954 (NNQDGDENNN…GDENNQDGDE (66 aa)) show a composition bias toward acidic residues. Composition is skewed to low complexity over residues 955–975 (NNQG…GGDE), 983–1026 (ENNQ…GGDE), and 1034–1081 (GENN…GNDE).

This is an uncharacterized protein from Dictyostelium discoideum (Social amoeba).